Here is a 200-residue protein sequence, read N- to C-terminus: LexA repressor (200 aa).

The segment at residues 27–47 (VREICNAVELRSTSTVHGHLK) is a DNA-binding region (H-T-H motif). Catalysis depends on for autocatalytic cleavage activity residues S124 and K161.

The protein belongs to the peptidase S24 family. Homodimer.

The catalysed reaction is Hydrolysis of Ala-|-Gly bond in repressor LexA.. Represses a number of genes involved in the response to DNA damage (SOS response), including recA and lexA. In the presence of single-stranded DNA, RecA interacts with LexA causing an autocatalytic cleavage which disrupts the DNA-binding part of LexA, leading to derepression of the SOS regulon and eventually DNA repair. In Clostridium tetani (strain Massachusetts / E88), this protein is LexA repressor.